A 1303-amino-acid chain; its full sequence is Protein STU1 (1303 aa).

3 disordered regions span residues 239–259, 531–664, and 953–977; these read RGSDPEPHVQRANTPRSNTPV, SQRE…GAVS, and EASDSSPQKQSQMDQISSKRSNSEH. Polar residues predominate over residues 249 to 259; it reads RANTPRSNTPV. Residues 554 to 568 are compositionally biased toward basic and acidic residues; it reads SLKEAILEKNKELRQ. A compositionally biased stretch (polar residues) spans 573-583; the sequence is SRNSGEQSTKI. Over residues 596–609 the composition is skewed to basic and acidic residues; it reads SRLEKSLLRPDVGH. Residues 618-629 show a composition bias toward polar residues; that stretch reads SSWTYPSTQSGP. A compositionally biased stretch (basic and acidic residues) spans 634–648; sequence KQRERSKTEVHKKSP. Composition is skewed to polar residues over residues 653–664 and 955–972; these read RPSSRLDTGAVS and SDSSPQKQSQMDQISSKR.

It belongs to the CLASP family. In terms of assembly, interacts with microtubules.

It is found in the cytoplasm. Its subcellular location is the cytoskeleton. It localises to the nucleus. The protein localises to the spindle. Its function is as follows. Microtubule binding protein that promotes the stabilization of dynamic microtubules. Required for mitotic spindle formation. The sequence is that of Protein STU1 (STU1) from Candida albicans (strain SC5314 / ATCC MYA-2876) (Yeast).